Reading from the N-terminus, the 499-residue chain is Glucose-6-phosphate isomerase (499 aa).

Glu-352 functions as the Proton donor in the catalytic mechanism. Residues His-383 and Lys-487 contribute to the active site.

This sequence belongs to the GPI family.

The protein localises to the cytoplasm. The enzyme catalyses alpha-D-glucose 6-phosphate = beta-D-fructose 6-phosphate. It functions in the pathway carbohydrate biosynthesis; gluconeogenesis. It participates in carbohydrate degradation; glycolysis; D-glyceraldehyde 3-phosphate and glycerone phosphate from D-glucose: step 2/4. Its function is as follows. Catalyzes the reversible isomerization of glucose-6-phosphate to fructose-6-phosphate. The sequence is that of Glucose-6-phosphate isomerase from Legionella pneumophila (strain Paris).